Reading from the N-terminus, the 342-residue chain is N-acetyl-gamma-glutamyl-phosphate reductase (342 aa).

Residue C147 is part of the active site.

This sequence belongs to the NAGSA dehydrogenase family. Type 1 subfamily.

It localises to the cytoplasm. The enzyme catalyses N-acetyl-L-glutamate 5-semialdehyde + phosphate + NADP(+) = N-acetyl-L-glutamyl 5-phosphate + NADPH + H(+). Its pathway is amino-acid biosynthesis; L-arginine biosynthesis; N(2)-acetyl-L-ornithine from L-glutamate: step 3/4. Catalyzes the NADPH-dependent reduction of N-acetyl-5-glutamyl phosphate to yield N-acetyl-L-glutamate 5-semialdehyde. The polypeptide is N-acetyl-gamma-glutamyl-phosphate reductase (Campylobacter jejuni subsp. doylei (strain ATCC BAA-1458 / RM4099 / 269.97)).